Reading from the N-terminus, the 107-residue chain is Phosphoribosyl-ATP pyrophosphatase (107 aa).

It belongs to the PRA-PH family.

It localises to the cytoplasm. The catalysed reaction is 1-(5-phospho-beta-D-ribosyl)-ATP + H2O = 1-(5-phospho-beta-D-ribosyl)-5'-AMP + diphosphate + H(+). It participates in amino-acid biosynthesis; L-histidine biosynthesis; L-histidine from 5-phospho-alpha-D-ribose 1-diphosphate: step 2/9. The sequence is that of Phosphoribosyl-ATP pyrophosphatase from Bacillus cereus (strain G9842).